The sequence spans 314 residues: Hydroxyethylthiazole kinase (314 aa).

Over residues 1-13 (MSNSASSFADVSS) the composition is skewed to low complexity. The disordered stretch occupies residues 1–24 (MSNSASSFADVSSGCTAGTPVPAD). M70 serves as a coordination point for substrate. ATP-binding residues include R145 and S217. Substrate is bound at residue G244.

It belongs to the Thz kinase family. The cofactor is Mg(2+).

The enzyme catalyses 5-(2-hydroxyethyl)-4-methylthiazole + ATP = 4-methyl-5-(2-phosphooxyethyl)-thiazole + ADP + H(+). The protein operates within cofactor biosynthesis; thiamine diphosphate biosynthesis; 4-methyl-5-(2-phosphoethyl)-thiazole from 5-(2-hydroxyethyl)-4-methylthiazole: step 1/1. In terms of biological role, catalyzes the phosphorylation of the hydroxyl group of 4-methyl-5-beta-hydroxyethylthiazole (THZ). In Bifidobacterium longum subsp. infantis (strain ATCC 15697 / DSM 20088 / JCM 1222 / NCTC 11817 / S12), this protein is Hydroxyethylthiazole kinase.